Reading from the N-terminus, the 404-residue chain is MHAWPDPSVPAVAGTPVPLKLFDTADQRVKEVDTTPDANGEVGMYVCGITPYDSTHLGHAATYLTFDLAQRQLLANGHKVHYVQNITDVDDPLFERAERDGVDWRELGTSQINLFRSDMEILSVIPPCDYIGAMESVDEVIAMVQQLLDAGAAYELDQGDIYASIDATEQFGYESNLDRATMEEYFAERGGDPDREGKRDPLDALVWRGHREGEPAWDSPFGPGRPGWHVECSAIATNRLGSHFAIQGGGSDLAFPHHEFSAAHAEAALKVERMAGHYVHAGMIALDGVKMSKSLGNLVFVHKLSEAGHDPSAIRLAVFAGHYREDRDFSDAILAEAEERLTRWREQLAGEVSEAEATEVVDKLRAILADDLNTPEALSLLDGAAGDCNQIIATALDGLLGVRI.

Cys47 is a binding site for Zn(2+). L-cysteinyl-5'-AMP contacts are provided by residues 47–50 (CGIT), Thr62, and 85–87 (NIT). Residues 49–59 (ITPYDSTHLGH) carry the 'HIGH' region motif. The 'ERGGDP' region signature appears at 188–193 (ERGGDP). Residue Trp228 participates in L-cysteinyl-5'-AMP binding. A Zn(2+)-binding site is contributed by Cys232. Residue 250–252 (GSD) participates in L-cysteinyl-5'-AMP binding. Residue His257 participates in Zn(2+) binding. Residue Ile284 participates in L-cysteinyl-5'-AMP binding. The 'KMSKS' region signature appears at 290–294 (KMSKS).

The protein belongs to the class-I aminoacyl-tRNA synthetase family. MshC subfamily. In terms of assembly, monomer. Zn(2+) is required as a cofactor.

It carries out the reaction 1D-myo-inositol 2-amino-2-deoxy-alpha-D-glucopyranoside + L-cysteine + ATP = 1D-myo-inositol 2-(L-cysteinylamino)-2-deoxy-alpha-D-glucopyranoside + AMP + diphosphate + H(+). Its function is as follows. Catalyzes the ATP-dependent condensation of GlcN-Ins and L-cysteine to form L-Cys-GlcN-Ins. The chain is L-cysteine:1D-myo-inositol 2-amino-2-deoxy-alpha-D-glucopyranoside ligase from Corynebacterium striatum.